Consider the following 266-residue polypeptide: Large ribosomal subunit protein eL8 (266 aa).

Basic and acidic residues predominate over residues 104 to 130 (PETKQEKKQRLLARAEQKAAGKGDTPT). The segment at 104–135 (PETKQEKKQRLLARAEQKAAGKGDTPTKRPPV) is disordered.

It belongs to the eukaryotic ribosomal protein eL8 family. Component of the large ribosomal subunit.

It is found in the cytoplasm. In terms of biological role, component of the large ribosomal subunit. The ribosome is a large ribonucleoprotein complex responsible for the synthesis of proteins in the cell. The chain is Large ribosomal subunit protein eL8 (RPL7A) from Gallus gallus (Chicken).